Here is a 368-residue protein sequence, read N- to C-terminus: Phosphoserine aminotransferase (368 aa).

Arginine 42 lines the L-glutamate pocket. Residues alanine 76–serine 77, tryptophan 102, threonine 152, aspartate 179, and glutamine 202 each bind pyridoxal 5'-phosphate. N6-(pyridoxal phosphate)lysine is present on lysine 203. Residue asparagine 245–threonine 246 coordinates pyridoxal 5'-phosphate.

It belongs to the class-V pyridoxal-phosphate-dependent aminotransferase family. SerC subfamily. In terms of assembly, homodimer. It depends on pyridoxal 5'-phosphate as a cofactor.

Its subcellular location is the cytoplasm. The catalysed reaction is O-phospho-L-serine + 2-oxoglutarate = 3-phosphooxypyruvate + L-glutamate. It catalyses the reaction 4-(phosphooxy)-L-threonine + 2-oxoglutarate = (R)-3-hydroxy-2-oxo-4-phosphooxybutanoate + L-glutamate. It participates in amino-acid biosynthesis; L-serine biosynthesis; L-serine from 3-phospho-D-glycerate: step 2/3. The protein operates within cofactor biosynthesis; pyridoxine 5'-phosphate biosynthesis; pyridoxine 5'-phosphate from D-erythrose 4-phosphate: step 3/5. Functionally, catalyzes the reversible conversion of 3-phosphohydroxypyruvate to phosphoserine and of 3-hydroxy-2-oxo-4-phosphonooxybutanoate to phosphohydroxythreonine. This Nitrosomonas europaea (strain ATCC 19718 / CIP 103999 / KCTC 2705 / NBRC 14298) protein is Phosphoserine aminotransferase.